The chain runs to 245 residues: Orotidine 5'-phosphate decarboxylase (245 aa).

Substrate is bound by residues Asp-22, Lys-44, 71–80 (DLKFHDIPNT), Thr-131, Arg-192, Gln-201, Gly-221, and Arg-222. The active-site Proton donor is the Lys-73.

Belongs to the OMP decarboxylase family. Type 1 subfamily. As to quaternary structure, homodimer.

The catalysed reaction is orotidine 5'-phosphate + H(+) = UMP + CO2. Its pathway is pyrimidine metabolism; UMP biosynthesis via de novo pathway; UMP from orotate: step 2/2. Catalyzes the decarboxylation of orotidine 5'-monophosphate (OMP) to uridine 5'-monophosphate (UMP). This chain is Orotidine 5'-phosphate decarboxylase, found in Salmonella newport (strain SL254).